A 473-amino-acid chain; its full sequence is Pyruvate kinase (473 aa).

R32 serves as a coordination point for substrate. K(+) is bound by residues N34, S36, D66, and T67. 34 to 37 (NFSH) provides a ligand contact to ATP. ATP is bound by residues R73 and K155. Mg(2+) is bound at residue E221. Residues G244, D245, and T277 each contribute to the substrate site. Residue D245 coordinates Mg(2+).

The protein belongs to the pyruvate kinase family. As to quaternary structure, homotetramer. The cofactor is Mg(2+). K(+) is required as a cofactor.

It catalyses the reaction pyruvate + ATP = phosphoenolpyruvate + ADP + H(+). It functions in the pathway carbohydrate degradation; glycolysis; pyruvate from D-glyceraldehyde 3-phosphate: step 5/5. This is Pyruvate kinase (pyk) from Clostridium acetobutylicum (strain ATCC 824 / DSM 792 / JCM 1419 / IAM 19013 / LMG 5710 / NBRC 13948 / NRRL B-527 / VKM B-1787 / 2291 / W).